The following is a 378-amino-acid chain: SWI/SNF-related matrix-associated actin-dependent regulator of chromatin subfamily B member 1 (378 aa).

Residues 1 to 106 (MIMALSKTFG…DEKYKAVSIS (106 aa)) are DNA-binding.

The protein belongs to the SNF5 family. In terms of assembly, component of the multiprotein chromatin-remodeling complexes SWI/SNF. Component of neural progenitors-specific chromatin remodeling complex (npBAF complex) and the neuron-specific chromatin remodeling complex (nBAF complex). Component of the BAF (SWI/SNF) chromatin remodeling complex. Component of the SWI/SNF-B (PBAF) chromatin remodeling complex. Binds to double-stranded DNA.

The protein localises to the nucleus. Its function is as follows. Involved in chromatin-remodeling. Core component of the BAF (SWI/SNF) complex. This ATP-dependent chromatin-remodeling complex plays important roles in cell proliferation and differentiation, in cellular antiviral activities and inhibition of tumor formation. Belongs to the neural progenitors-specific chromatin remodeling complex (npBAF complex) and the neuron-specific chromatin remodeling complex (nBAF complex) and may play a role in neural development. The sequence is that of SWI/SNF-related matrix-associated actin-dependent regulator of chromatin subfamily B member 1 (smarcb1) from Xenopus laevis (African clawed frog).